The primary structure comprises 558 residues: uncharacterized protein (558 aa).

Helical transmembrane passes span 63 to 83 (LTGI…PSIY), 90 to 110 (VTFG…TYWI), 143 to 163 (VAAV…TLYG), 168 to 188 (VFVT…ATNC), 226 to 246 (SLGS…VLLV), and 258 to 278 (VLIL…ILAW). Residues 279–330 (LTAAPVRVVRAALKRVEQGDLRGDLVVFDGTELGELQRGFNAMVNGLRERER) form the HAMP domain. The Guanylate cyclase domain maps to 362 to 486 (AVVFVDIVGS…KPVNQAARLC (125 aa)). The disordered stretch occupies residues 529-558 (TQLASPHRRPPGSIHLTAEHAEEIRTDRLG). A compositionally biased stretch (basic and acidic residues) spans 545 to 558 (TAEHAEEIRTDRLG).

Belongs to the adenylyl cyclase class-3 family.

The protein resides in the cell membrane. This is an uncharacterized protein from Mycobacterium tuberculosis (strain CDC 1551 / Oshkosh).